Here is a 131-residue protein sequence, read N- to C-terminus: Holo-[acyl-carrier-protein] synthase (131 aa).

Mg(2+) contacts are provided by Asp-6 and Glu-55.

This sequence belongs to the P-Pant transferase superfamily. AcpS family. The cofactor is Mg(2+).

It localises to the cytoplasm. The enzyme catalyses apo-[ACP] + CoA = holo-[ACP] + adenosine 3',5'-bisphosphate + H(+). Transfers the 4'-phosphopantetheine moiety from coenzyme A to a Ser of acyl-carrier-protein. This is Holo-[acyl-carrier-protein] synthase from Verminephrobacter eiseniae (strain EF01-2).